Consider the following 266-residue polypeptide: MMRLNIAPAPWPGAPVVVLSAGLGGGGGYWLAQRAALEAQYQLVSYDHNGTGENAGPLPADYSMATMAQELLSALQAAGITRFALVGHALGALIGLQLALDRPEAVSALVLVNGWLTLSPHTRRCFLVRERLLHAGGAQAWVEAQPLFLYPAEWMAARLPRLEAEDALAISHFQGKENLLKRLQALKQADFSRRAAAIACPTLIVSAADDLLVPASCSRVLQAAIPGSQRVEMPWGGHACNVTDADTFNTILCDGLAAMLPVAREI.

Positions Pro15 to Ala239 constitute an AB hydrolase-1 domain.

It belongs to the AB hydrolase superfamily. Hydrolase RutD family.

It catalyses the reaction carbamate + 2 H(+) = NH4(+) + CO2. Involved in pyrimidine catabolism. May facilitate the hydrolysis of carbamate, a reaction that can also occur spontaneously. The sequence is that of Putative carbamate hydrolase RutD from Klebsiella variicola (strain At-22).